Here is a 184-residue protein sequence, read N- to C-terminus: MNKGNLIKNYAVALLNNAMVDNIQDKIFEEITSINRIITDNFDIREFLFSPIVNKNDKINAVNSLAKNIKISTIVQNFLLLLVKNSRTAILSNIVDAYNTLLYESKNIKIVQVISANKLQPKEQEWIKSRIEKELNQTTEILFDIDNTIIGGIIIKYDSMLQDYSIKGSLEKIKKALKIVNIAV.

It belongs to the ATPase delta chain family. As to quaternary structure, F-type ATPases have 2 components, F(1) - the catalytic core - and F(0) - the membrane proton channel. F(1) has five subunits: alpha(3), beta(3), gamma(1), delta(1), epsilon(1). F(0) has three main subunits: a(1), b(2) and c(10-14). The alpha and beta chains form an alternating ring which encloses part of the gamma chain. F(1) is attached to F(0) by a central stalk formed by the gamma and epsilon chains, while a peripheral stalk is formed by the delta and b chains.

The protein resides in the cell inner membrane. In terms of biological role, f(1)F(0) ATP synthase produces ATP from ADP in the presence of a proton or sodium gradient. F-type ATPases consist of two structural domains, F(1) containing the extramembraneous catalytic core and F(0) containing the membrane proton channel, linked together by a central stalk and a peripheral stalk. During catalysis, ATP synthesis in the catalytic domain of F(1) is coupled via a rotary mechanism of the central stalk subunits to proton translocation. Its function is as follows. This protein is part of the stalk that links CF(0) to CF(1). It either transmits conformational changes from CF(0) to CF(1) or is implicated in proton conduction. The sequence is that of ATP synthase subunit delta from Rickettsia conorii (strain ATCC VR-613 / Malish 7).